A 387-amino-acid polypeptide reads, in one-letter code: Acetylornithine aminotransferase (387 aa).

Pyridoxal 5'-phosphate is bound by residues glycine 97–threonine 98 and phenylalanine 130. Arginine 133 is a N(2)-acetyl-L-ornithine binding site. Residue aspartate 215–glutamine 218 coordinates pyridoxal 5'-phosphate. An N6-(pyridoxal phosphate)lysine modification is found at lysine 244. Threonine 273 contributes to the pyridoxal 5'-phosphate binding site.

This sequence belongs to the class-III pyridoxal-phosphate-dependent aminotransferase family. ArgD subfamily. As to quaternary structure, homodimer. Requires pyridoxal 5'-phosphate as cofactor.

The protein localises to the cytoplasm. The catalysed reaction is N(2)-acetyl-L-ornithine + 2-oxoglutarate = N-acetyl-L-glutamate 5-semialdehyde + L-glutamate. It functions in the pathway amino-acid biosynthesis; L-arginine biosynthesis; N(2)-acetyl-L-ornithine from L-glutamate: step 4/4. The sequence is that of Acetylornithine aminotransferase from Clostridium acetobutylicum (strain ATCC 824 / DSM 792 / JCM 1419 / IAM 19013 / LMG 5710 / NBRC 13948 / NRRL B-527 / VKM B-1787 / 2291 / W).